Here is a 524-residue protein sequence, read N- to C-terminus: Beta-glucosidase 23 (524 aa).

The first 24 residues, 1-24 (MVLQKLPLIGLLLLLTIVASPANA), serve as a signal peptide directing secretion. Residue Gln54 participates in a beta-D-glucoside binding. The N-linked (GlcNAc...) asparagine glycan is linked to Asn60. A beta-D-glucoside contacts are provided by residues His157 and 202-203 (NE). Glu203 functions as the Proton donor in the catalytic mechanism. Cys222 and Cys230 are oxidised to a cystine. A beta-D-glucoside-binding residues include Tyr346 and Glu418. Glu418 (nucleophile) is an active-site residue. The N-linked (GlcNAc...) asparagine glycan is linked to Asn461. A beta-D-glucoside-binding positions include Trp468, 475–476 (EW), and Phe484. N-linked (GlcNAc...) asparagine glycosylation occurs at Asn494. The short motif at 521-524 (KDEL) is the Prevents secretion from ER element.

The protein belongs to the glycosyl hydrolase 1 family. As to quaternary structure, homodimers. Binds to the deubiquitinating enzyme AMSH3. The inactive form interacts with PBP1/JAL30 to form the PYK10 complex, at least composed of PYK10/BGLU23, BGLU21, BGLU22, JAL22, JAL23, PBP1/JAL30, PBP2/JAL31, JAL32, JAL33, JAL34, JAL35, GLL22 and GLL23. Post-translationally, forms interchain disulfide bonds. In terms of tissue distribution, expressed exclusively in roots.

The protein resides in the endoplasmic reticulum lumen. It catalyses the reaction Hydrolysis of terminal, non-reducing beta-D-glucosyl residues with release of beta-D-glucose.. With respect to regulation, activated by tissue damage and upon binding to PBP1 or PBP2. Functionally, beta-D-glucosidase active on scopolin &gt; esculin &gt;&gt; 4-MU-glucoside &gt;&gt; DIMBOA-glucoside. No activity with pNP-glucoside, oNP-glucoside and sinigrin as substrates. May possess beta-D-fucosidase activity. Required for the beneficial interaction with the endophytic fungus P.indica. May participate in the control of root colonization by P.indica by repressing defense responses and modulating other responses required for a mutualistic interaction. The polypeptide is Beta-glucosidase 23 (Arabidopsis thaliana (Mouse-ear cress)).